Consider the following 263-residue polypeptide: Orotidine 5'-phosphate decarboxylase (263 aa).

Substrate is bound by residues Asp36, 58-60, 90-99, Tyr216, and Arg234; these read KTH and DRKFADIGNT. The Proton donor role is filled by Lys92.

Belongs to the OMP decarboxylase family.

It carries out the reaction orotidine 5'-phosphate + H(+) = UMP + CO2. Its pathway is pyrimidine metabolism; UMP biosynthesis via de novo pathway; UMP from orotate: step 2/2. This Komagataella pastoris (Yeast) protein is Orotidine 5'-phosphate decarboxylase (URA3).